The following is a 1159-amino-acid chain: Caspase recruitment domain-containing protein 11 (1159 aa).

Residues 18–110 form the CARD domain; sequence EEEALWDNVE…ELYKLVTGKE (93 aa). The segment at 111–128 is linker; it reads PTRRFSTIVVEEGHEGLT. Positions 176-449 form a coiled coil; sequence FQERYYKMKE…KDNGSLDQSL (274 aa). The interval 441–496 is disordered; that stretch reads DNGSLDQSLPRHLPATIISQNLGDTSPRTNGQEADDSSTSEESPEDSKYFLPYHPP. Residues Ser-448 and Ser-466 each carry the phosphoserine modification. The tract at residues 450–671 is inhibitory domain (ID); the sequence is PRHLPATIIS…GHVRGTGPLV (222 aa). Residues 457–472 are compositionally biased toward polar residues; sequence IISQNLGDTSPRTNGQ. The span at 473–484 shows a compositional bias: acidic residues; sequence EADDSSTSEESP. A phosphoserine mark is found at Ser-512 and Ser-540. Positions 532–578 are disordered; the sequence is HEEDFTDGSPSSSRSLPVTSSFSKMQPHRSRSSIMSITAEPPGNDSI. Residues 540 to 554 are compositionally biased toward low complexity; that stretch reads SPSSSRSLPVTSSFS. Position 564 is a phosphoserine; by PKC/PRKCB and PKC/PRKCQ (Ser-564). Residue Ser-598 is modified to Phosphoserine. A disordered region spans residues 610–631; that stretch reads NHERYSFGPPSIHSSSSSHQSE. The span at 620–630 shows a compositional bias: low complexity; it reads SIHSSSSSHQS. Phosphoserine; by PKC/PRKCB and PKC/PRKCQ is present on residues Ser-649 and Ser-657. One can recognise a PDZ domain in the interval 672–760; it reads QHTTLNGDGL…LITLHYKVNH (89 aa). Residues Ser-891 and Ser-930 each carry the phosphoserine modification. Residues 978–1145 enclose the Guanylate kinase-like domain; the sequence is RRRPVLFTPT…LLRVLKDKIV (168 aa).

As to quaternary structure, homodimer; disulfide-linked. Homomultimer; polymerizes following activation, forming a nucleating helical template that seeds BCL10-filament formation via a CARD-CARD interaction. Interacts (via CARD domain) with BCL10 (via CARD domain); interaction takes place following CARD11 activation and polymerization, leading to the formation of a filamentous CBM complex assembly. Component of a CBM complex (CARD11-BCL10-MALT1) complex involved in NF-kappa-B activation. Found in a membrane raft complex, at least composed of BCL10, CARD11, DPP4 and IKBKB. Interacts (via PDZ domain) with DPP4 (via cytoplasmic tail). Phosphorylation at Ser-564, Ser-649 and Ser-657 by PRKCB and PRKCQ leads to a shift from an inactive to an active form that activates the NF-kappa-B signaling.

Its subcellular location is the cytoplasm. It is found in the membrane raft. Its activity is regulated as follows. Maintained in an autoinhibited state via homodimerization in which the CARD domain forms an extensive interaction with the adjacent linker and coiled-coil regions. Activation downstream of T-cell receptor (TCR) by phosphorylation by PRKCB and PRKCQ triggers CARD11 homooligomerization and BCL10 recruitment, followed by activation of NF-kappa-B. In terms of biological role, adapter protein that plays a key role in adaptive immune response by transducing the activation of NF-kappa-B downstream of T-cell receptor (TCR) and B-cell receptor (BCR) engagement. Transduces signals downstream TCR or BCR activation via the formation of a multiprotein complex together with BCL10 and MALT1 that induces NF-kappa-B and MAP kinase p38 (MAPK11, MAPK12, MAPK13 and/or MAPK14) pathways. Upon activation in response to TCR or BCR triggering, CARD11 homooligomerizes to form a nucleating helical template that recruits BCL10 via CARD-CARD interaction, thereby promoting polymerization of BCL10 and subsequent recruitment of MALT1: this leads to I-kappa-B kinase (IKK) phosphorylation and degradation, and release of NF-kappa-B proteins for nuclear translocation. Its binding to DPP4 induces T-cell proliferation and NF-kappa-B activation in a T-cell receptor/CD3-dependent manner. Promotes linear ubiquitination of BCL10 by promoting the targeting of BCL10 to RNF31/HOIP. Stimulates the phosphorylation of BCL10. Also activates the TORC1 signaling pathway. The protein is Caspase recruitment domain-containing protein 11 of Mus musculus (Mouse).